We begin with the raw amino-acid sequence, 186 residues long: Threonylcarbamoyl-AMP synthase (186 aa).

One can recognise a YrdC-like domain in the interval 3–186 (ELTLDSAVAT…DALSGNVLRS (184 aa)).

Belongs to the SUA5 family. TsaC subfamily.

The protein resides in the cytoplasm. The catalysed reaction is L-threonine + hydrogencarbonate + ATP = L-threonylcarbamoyladenylate + diphosphate + H2O. In terms of biological role, required for the formation of a threonylcarbamoyl group on adenosine at position 37 (t(6)A37) in tRNAs that read codons beginning with adenine. Catalyzes the conversion of L-threonine, HCO(3)(-)/CO(2) and ATP to give threonylcarbamoyl-AMP (TC-AMP) as the acyladenylate intermediate, with the release of diphosphate. This is Threonylcarbamoyl-AMP synthase from Stenotrophomonas maltophilia (strain K279a).